The primary structure comprises 370 residues: StAR-related lipid transfer protein 7, mitochondrial (370 aa).

The transit peptide at 1 to 58 directs the protein to the mitochondrion; it reads MLPRRLLAAWLAGTRGGGLLALLANQCRFVTGLRVRRAQQIAQLYGRLYSESSRRVLL. Residues 86–111 are a coiled coil; that stretch reads DEERIQEEELQRSINEMKRLEEMSNM. Disordered stretches follow at residues 111–138 and 343–370; these read MFQS…EGKE and MSSE…IEYA. Positions 112–327 constitute an START domain; that stretch reads FQSSGVQHHP…LHMATLKAKN (216 aa).

Post-translationally, proteolytically cleaved by PARL. Expressed in nasal epithelial cells. Down-regulated in nasal epithelial cells in patients experiencing an asthma exacerbation as compared to stable asthmatics and healthy controls.

The protein resides in the mitochondrion. May play a protective role in mucosal tissues by preventing exaggerated allergic responses. This Homo sapiens (Human) protein is StAR-related lipid transfer protein 7, mitochondrial (STARD7).